The chain runs to 157 residues: Transcription factor HES-2 (157 aa).

In terms of domain architecture, bHLH spans 13-70 (LRKSLKPLLEKRRRARINESLSQLKGLVLPLLGAETSRYSKLEKADILEMTVRFLREQ). An Orange domain is found at 86 to 119 (YLEGYRACLARLARVLPACSVLEPAVSARLLEHL). Residues 124-157 (VSGGPPSLTPASASAPAPSPPVPPPSSLGLWRPW) form a disordered region. The span at 125–139 (SGGPPSLTPASASAP) shows a compositional bias: low complexity. Over residues 140–149 (APSPPVPPPS) the composition is skewed to pro residues. A WRPW motif motif is present at residues 154–157 (WRPW).

In terms of assembly, transcription repression requires formation of a complex with a corepressor protein of the Groucho/TLE family.

It is found in the nucleus. In terms of biological role, transcriptional repressor of genes that require a bHLH protein for their transcription. The chain is Transcription factor HES-2 (Hes2) from Rattus norvegicus (Rat).